We begin with the raw amino-acid sequence, 4650 residues long: Nonribosomal peptide synthetase lenA (4650 aa).

The adenylation 1 stretch occupies residues 227–628 (GSILDTIRAK…DGSVIHVGRK (402 aa)). A Carrier 1 domain is found at 773 to 849 (PPETVLEKAL…KLAQYLRNTE (77 aa)). Serine 810 carries the post-translational modification O-(pantetheine 4'-phosphoryl)serine. The tract at residues 890–1212 (EDCYPCTALQ…CDFQSQLIFQ (323 aa)) is condensation 1. Residues 1288–1622 (ELELNAQKEP…RKIRPGYLGR (335 aa)) form an adenylation 2 region. Residues 1745 to 1822 (PPVSAAEKKW…EIAALSETRD (78 aa)) form the Carrier 2 domain. Serine 1782 bears the O-(pantetheine 4'-phosphoryl)serine mark. Residues 1850–2110 (ATNLIAATVH…GEKTRPGGGA (261 aa)) are condensation 2. Residues 2183-2511 (RCVHDLVHDA…RTGDLIKLRG (329 aa)) are adenylation 3. The Carrier 3 domain maps to 2630–2708 (APQNRLQHDI…EADVGLDHAS (79 aa)). Residue serine 2667 is modified to O-(pantetheine 4'-phosphoryl)serine. Residues 2722-2998 (ESMARALAVI…KDARRRSPAN (277 aa)) are epimerase. Positions 3128–3565 (VQDVYPCTPI…VDDSQRQQIL (438 aa)) are condensation 3. Positions 3578 to 3980 (CVHHIIHQRC…FVGRKDNQIK (403 aa)) are adenylation 4. One can recognise a Carrier 4 domain in the interval 4114–4190 (TPSTPLEAQL…QLAAVLEEGA (77 aa)). Serine 4151 carries the post-translational modification O-(pantetheine 4'-phosphoryl)serine. The interval 4249-4648 (HMVLTFSQPV…TTTPEKLVAE (400 aa)) is condensation 4.

Belongs to the NRP synthetase family. Requires pantetheine 4'-phosphate as cofactor.

The protein operates within alkaloid biosynthesis. In terms of biological role, nonribosomal peptide synthetase; part of the gene cluster that mediates the biosynthesis of the ergot alkaloids lentopeptins A and B. Within the pathway, lenA catalyzes the biosynthesis of the Ala-Val-Ala peptide chain, including a cinnamic acid moiety as the starting unit. The release of the peptide from the enzyme is accomplished via a cyclization reaction catalyzed by the terminal condensation-like (Ct) domain of lenA to form the N-acyldiketopiperazine intermediate. The reaction appears to proceed through a nucleophilic attack on the carbonyl carbon by a lone electron pair of the valine amide nitrogen. The phenylalanine ammonia-lyase lenB provides the starter unit for the synthesis of the N-acyldiketopiperazine intermediate by the NRPS lenA, while the cytochrome P450 monooxygenase lenC is involved in the post-NRPS oxidative modification steps to form lentopeptins A and B. This chain is Nonribosomal peptide synthetase lenA, found in Aspergillus lentulus.